We begin with the raw amino-acid sequence, 260 residues long: Thiazole synthase (260 aa).

Residue Lys96 is the Schiff-base intermediate with DXP of the active site. 1-deoxy-D-xylulose 5-phosphate contacts are provided by residues Gly157, 184 to 185 (AG), and 206 to 207 (NT).

It belongs to the ThiG family. Homotetramer. Forms heterodimers with either ThiH or ThiS.

The protein localises to the cytoplasm. The enzyme catalyses [ThiS sulfur-carrier protein]-C-terminal-Gly-aminoethanethioate + 2-iminoacetate + 1-deoxy-D-xylulose 5-phosphate = [ThiS sulfur-carrier protein]-C-terminal Gly-Gly + 2-[(2R,5Z)-2-carboxy-4-methylthiazol-5(2H)-ylidene]ethyl phosphate + 2 H2O + H(+). The protein operates within cofactor biosynthesis; thiamine diphosphate biosynthesis. Its function is as follows. Catalyzes the rearrangement of 1-deoxy-D-xylulose 5-phosphate (DXP) to produce the thiazole phosphate moiety of thiamine. Sulfur is provided by the thiocarboxylate moiety of the carrier protein ThiS. In vitro, sulfur can be provided by H(2)S. The polypeptide is Thiazole synthase (Bradyrhizobium sp. (strain ORS 278)).